The sequence spans 169 residues: Crossover junction endodeoxyribonuclease RuvC (169 aa).

Active-site residues include aspartate 15, glutamate 75, and aspartate 147. Residues aspartate 15, glutamate 75, and aspartate 147 each coordinate Mg(2+).

This sequence belongs to the RuvC family. In terms of assembly, homodimer which binds Holliday junction (HJ) DNA. The HJ becomes 2-fold symmetrical on binding to RuvC with unstacked arms; it has a different conformation from HJ DNA in complex with RuvA. In the full resolvosome a probable DNA-RuvA(4)-RuvB(12)-RuvC(2) complex forms which resolves the HJ. It depends on Mg(2+) as a cofactor.

The protein resides in the cytoplasm. It catalyses the reaction Endonucleolytic cleavage at a junction such as a reciprocal single-stranded crossover between two homologous DNA duplexes (Holliday junction).. Its function is as follows. The RuvA-RuvB-RuvC complex processes Holliday junction (HJ) DNA during genetic recombination and DNA repair. Endonuclease that resolves HJ intermediates. Cleaves cruciform DNA by making single-stranded nicks across the HJ at symmetrical positions within the homologous arms, yielding a 5'-phosphate and a 3'-hydroxyl group; requires a central core of homology in the junction. The consensus cleavage sequence is 5'-(A/T)TT(C/G)-3'. Cleavage occurs on the 3'-side of the TT dinucleotide at the point of strand exchange. HJ branch migration catalyzed by RuvA-RuvB allows RuvC to scan DNA until it finds its consensus sequence, where it cleaves and resolves the cruciform DNA. This is Crossover junction endodeoxyribonuclease RuvC from Caulobacter vibrioides (strain ATCC 19089 / CIP 103742 / CB 15) (Caulobacter crescentus).